We begin with the raw amino-acid sequence, 349 residues long: Anthranilate phosphoribosyltransferase (349 aa).

Residues Gly-82, 85–86, 92–95, 110–118, and Ser-122 each bind 5-phospho-alpha-D-ribose 1-diphosphate; these read GD, NVST, and KHGNRAVSG. Residue Gly-82 participates in anthranilate binding. Residue Ser-94 participates in Mg(2+) binding. Anthranilate is bound at residue Asn-113. Residue Arg-168 coordinates anthranilate. The Mg(2+) site is built by Asp-227 and Glu-228.

The protein belongs to the anthranilate phosphoribosyltransferase family. As to quaternary structure, homodimer. The cofactor is Mg(2+).

It carries out the reaction N-(5-phospho-beta-D-ribosyl)anthranilate + diphosphate = 5-phospho-alpha-D-ribose 1-diphosphate + anthranilate. It functions in the pathway amino-acid biosynthesis; L-tryptophan biosynthesis; L-tryptophan from chorismate: step 2/5. Its function is as follows. Catalyzes the transfer of the phosphoribosyl group of 5-phosphorylribose-1-pyrophosphate (PRPP) to anthranilate to yield N-(5'-phosphoribosyl)-anthranilate (PRA). The sequence is that of Anthranilate phosphoribosyltransferase from Pseudomonas savastanoi pv. phaseolicola (strain 1448A / Race 6) (Pseudomonas syringae pv. phaseolicola (strain 1448A / Race 6)).